A 112-amino-acid chain; its full sequence is Gonad-inhibiting hormone (112 aa).

Positions Met1–Gln31 are cleaved as a signal peptide. Intrachain disulfides connect Cys41–Cys78, Cys58–Cys74, and Cys61–Cys87. The residue at position 109 (Ala109) is an Alanine amide.

In terms of tissue distribution, produced in the eyestalk X-organ sinus gland complex of male and female lobsters.

The protein resides in the secreted. In terms of biological role, inhibits vitellogenesis in female animals. Plays a prominent role in the regulation of reproduction/molting processes. In Homarus americanus (American lobster), this protein is Gonad-inhibiting hormone.